The primary structure comprises 107 residues: Inner membrane protein YiaW (107 aa).

Over 1 to 6 (MFLDYF) the chain is Cytoplasmic. The chain crosses the membrane as a helical span at residues 7-29 (ALGVLIFVFLVIFYGIIILHDIP). Residues 30-43 (YLIAKKRNHPHADA) are Periplasmic-facing. The helical transmembrane segment at 44-66 (IHVAGWVSLFTLHVIWPFLWIWA) threads the bilayer. The Cytoplasmic segment spans residues 67–107 (TLYRPERGWGMQSHDSSVMQLQQRIAGLEKQLADIKSSSAE).

This sequence to E.coli YibI.

The protein resides in the cell inner membrane. The chain is Inner membrane protein YiaW (yiaW) from Escherichia coli O157:H7.